The sequence spans 338 residues: RAB6-interacting golgin (338 aa).

Basic and acidic residues-rich tracts occupy residues 1–14 (MTEK…DEIL) and 46–59 (RMPD…DQLR). 2 disordered regions span residues 1-109 (MTEK…LNLD) and 127-188 (ARDK…SPFK). 2 stretches are compositionally biased toward low complexity: residues 60–73 (KQQQ…IQKP) and 153–167 (SGGD…DDGS). A coiled-coil region spans residues 192 to 244 (LKDFEQHRRMIEEQNKQKKQMLYQAIEQHTQKTAAESRKIEEIRHELSKLESD). Residues 244 to 260 (DLAVDVALLRKQIDNAC) form an essential for Sas-6 binding region. Residues 246 to 286 (AVDVALLRKQIDNACIHFANVEKQYVKIEAQFLRAKIELHN) form a necessary for localization to the centrosome region. A necessary for localization to the Golgi region spans residues 246–323 (AVDVALLRKQ…TELMQKVGLS (78 aa)). The interval 260-286 (CIHFANVEKQYVKIEAQFLRAKIELHN) is necessary for interaction with Sas-6 and essential for homodimerization.

Belongs to the GORAB family. In terms of assembly, homodimer (via C-terminus); dimerization appears to be required for its trans-Golgi localization but not for its function and centriolar localization. Interacts (via C-terminus) with Rab6; binds Rab6 as a homodimer, this interaction seems to be required for trans-Golgi localization. Interacts (via C-terminus) with Sas-6; binds as a monomer to a Sas-6 homodimer.

It is found in the cytoplasm. It localises to the cytoskeleton. Its subcellular location is the microtubule organizing center. The protein localises to the centrosome. The protein resides in the centriole. It is found in the golgi apparatus. It localises to the trans-Golgi network. Functionally, required for centriole duplication likely through its interaction with Sas-6. During embryogenesis, maternally provided protein is required for centrosome duplication and nuclear division cycles of the syncytial embryos. In femoral chordotonal organs, required for sensory cilia structural integrity and functionality necessary for motor coordination. In male germline, has a role in cytokinesis which seems dependent on its localization to the Golgi. In Drosophila melanogaster (Fruit fly), this protein is RAB6-interacting golgin.